We begin with the raw amino-acid sequence, 374 residues long: Probable quinol oxidase subunit 2 (374 aa).

The first 19 residues, 1-19 (MSKFKSLLLLFGTLILLSG), serve as a signal peptide directing secretion. Residue Cys20 is the site of N-palmitoyl cysteine attachment. Cys20 carries the S-diacylglycerol cysteine lipid modification. 2 helical membrane-spanning segments follow: residues 43-63 (SIIF…IFIF) and 82-102 (IETI…IPTV). The interval 317–374 (ERHGMKPMILGNNEKYDNEFKKEEDHNSKEMEKISKGAKDENASKLHKKEHDDHGGGH) is disordered. Basic and acidic residues predominate over residues 330 to 374 (EKYDNEFKKEEDHNSKEMEKISKGAKDENASKLHKKEHDDHGGGH).

Belongs to the cytochrome c oxidase subunit 2 family.

The protein localises to the cell membrane. It carries out the reaction 2 a quinol + O2 = 2 a quinone + 2 H2O. Catalyzes quinol oxidation with the concomitant reduction of oxygen to water. Subunit II transfers the electrons from a quinol to the binuclear center of the catalytic subunit I. The sequence is that of Probable quinol oxidase subunit 2 (qoxA) from Staphylococcus epidermidis (strain ATCC 12228 / FDA PCI 1200).